The following is a 459-amino-acid chain: UDP-N-acetylmuramate--L-alanine ligase (459 aa).

Residue 113 to 119 (GSHGKTS) participates in ATP binding.

This sequence belongs to the MurCDEF family.

It localises to the cytoplasm. It carries out the reaction UDP-N-acetyl-alpha-D-muramate + L-alanine + ATP = UDP-N-acetyl-alpha-D-muramoyl-L-alanine + ADP + phosphate + H(+). It participates in cell wall biogenesis; peptidoglycan biosynthesis. Functionally, cell wall formation. In Desulfotalea psychrophila (strain LSv54 / DSM 12343), this protein is UDP-N-acetylmuramate--L-alanine ligase.